A 304-amino-acid polypeptide reads, in one-letter code: Acetyl-coenzyme A carboxylase carboxyl transferase subunit beta (304 aa).

The 270-residue stretch at 25 to 294 folds into the CoA carboxyltransferase N-terminal domain; that stretch reads LWIKCPETGE…KAIKRDTATE (270 aa).

It belongs to the AccD/PCCB family. In terms of assembly, acetyl-CoA carboxylase is a heterohexamer composed of biotin carboxyl carrier protein (AccB), biotin carboxylase (AccC) and two subunits each of ACCase subunit alpha (AccA) and ACCase subunit beta (AccD).

The protein localises to the cytoplasm. The catalysed reaction is N(6)-carboxybiotinyl-L-lysyl-[protein] + acetyl-CoA = N(6)-biotinyl-L-lysyl-[protein] + malonyl-CoA. The protein operates within lipid metabolism; malonyl-CoA biosynthesis; malonyl-CoA from acetyl-CoA: step 1/1. Component of the acetyl coenzyme A carboxylase (ACC) complex. Biotin carboxylase (BC) catalyzes the carboxylation of biotin on its carrier protein (BCCP) and then the CO(2) group is transferred by the transcarboxylase to acetyl-CoA to form malonyl-CoA. This chain is Acetyl-coenzyme A carboxylase carboxyl transferase subunit beta, found in Sinorhizobium medicae (strain WSM419) (Ensifer medicae).